The primary structure comprises 155 residues: Putative pre-16S rRNA nuclease (155 aa).

This sequence belongs to the YqgF nuclease family.

The protein localises to the cytoplasm. Could be a nuclease involved in processing of the 5'-end of pre-16S rRNA. In Corynebacterium jeikeium (strain K411), this protein is Putative pre-16S rRNA nuclease.